We begin with the raw amino-acid sequence, 198 residues long: Single-stranded DNA cytosine deaminase (198 aa).

The Bipartite nuclear localization signal signature appears at 1 to 30 (MDSLLMNRRKFLYQFKNVRWAKGRRETYLC). An interaction with SUPT6H region spans residues 2–26 (DSLLMNRRKFLYQFKNVRWAKGRRE). The region spanning 23–129 (GRRETYLCYV…KAEPEGLRRL (107 aa)) is the CMP/dCMP-type deaminase domain. Thr-27 is modified (phosphothreonine; by PKA). Position 38 is a phosphoserine; by PKA (Ser-38). The important for interaction with CTNNBL1 stretch occupies residues 39 to 42 (ATSF). His-56 contacts Zn(2+). The active-site Proton donor is the Glu-58. Residues Cys-87 and Cys-90 each coordinate Zn(2+). The interval 88–116 (YDCARHVADFLRGNPNLSLRIFTARLYFC) is required for interaction with RNF126. Positions 183–198 (LYEVDDLRDAFRTLGL) match the Nuclear export signal motif.

Belongs to the cytidine and deoxycytidylate deaminase family. Interacts with CTNNBL1; the interaction is important for the immunoglobulin switch activity of AICDA. Interacts (via its NLS) with KPNA1. Interacts with PKA/PRKACA and PRKAR1A/PKR1. Interacts with TRIM28 and NCL. Interacts with SUPT6H. Interacts with RNF126. Directly interacts with MCM3AP; this interaction may favor AICDA recruitment to immunoglobulin variable region genes, hence promoting somatic hypermutations. The cofactor is Zn(2+). Ser-38 is the major site whereas Thr-27 is the minor site of phosphorylation. Phosphorylation regulates its class-switch recombination activity. Post-translationally, probably monoubiquitinated on several residues by RNF126. As to expression, strongly expressed in lymph nodes and tonsils.

Its subcellular location is the nucleus. It is found in the cytoplasm. The protein resides in the cytosol. The catalysed reaction is a 2'-deoxycytidine in single-stranded DNA + H2O + H(+) = a 2'-deoxyuridine in single-stranded DNA + NH4(+). Functionally, single-stranded DNA-specific cytidine deaminase. Involved in somatic hypermutation (SHM), gene conversion, and class-switch recombination (CSR) in B-lymphocytes by deaminating C to U during transcription of Ig-variable (V) and Ig-switch (S) region DNA. Required for several crucial steps of B-cell terminal differentiation necessary for efficient antibody responses. May also play a role in the epigenetic regulation of gene expression by participating in DNA demethylation. This Homo sapiens (Human) protein is Single-stranded DNA cytosine deaminase (AICDA).